We begin with the raw amino-acid sequence, 388 residues long: MVLSLLSVMLLSGYKFLSKKEELVTILPLPQVENKFKPQKIWSYYIGSNNGGGDFYSNLQPTVQNTRVFVANRYGLVKALDADSGKELWAKDLSIYTGCFSRNRPAQLSGGVTAVGNRIYVASELAKVYAMEAKCGSLAWEVLVAGETLSPPVVSDGVILIHTSNGMLQALNEADGALKWTVNLEAKMLNIRGGSTPTTACGTAIVGSDNGLVSAVMLNIGQIIWQQRISQTGGVTEIARINDVQATPVVVNGYVYALAYNGNLAALDLFSGKLMWSREIGSFTNMLVENGIIYLVDQNDRVIAVDAKNGITSWYQSALLHRNLTSPVLNKDSIVIGDSGGYLHWINIDDGRLVAQKKIASALLVTPLFDGDKIIVQATNGEVHAIIR.

The signal sequence occupies residues 1-17 (MVLSLLSVMLLSGYKFL).

This sequence belongs to the BamB family. In terms of assembly, part of the Bam complex, which is composed of the outer membrane protein BamA, and four lipoproteins BamB, BamC, BamD and BamE.

The protein localises to the cell outer membrane. In terms of biological role, part of the outer membrane protein assembly complex, which is involved in assembly and insertion of beta-barrel proteins into the outer membrane. The protein is Outer membrane protein assembly factor BamB of Moranella endobia (strain PCIT).